We begin with the raw amino-acid sequence, 498 residues long: RuvB-like helicase 2 (498 aa).

79-86 (GPPSTGKT) is a binding site for ATP. Residues 458–498 (VTIGQESTDGSTQPQAKQQEVAQPEATQPQSQPEDDKMETD) are disordered. Residues 461 to 489 (GQESTDGSTQPQAKQQEVAQPEATQPQSQ) show a composition bias toward polar residues.

It belongs to the RuvB family. As to quaternary structure, may form heterododecamers with RVB1. Component of the SWR1 chromatin remodeling complex, the INO80 chromatin remodeling complex, and of the R2TP complex.

The protein resides in the nucleus. It catalyses the reaction ATP + H2O = ADP + phosphate + H(+). DNA helicase which participates in several chromatin remodeling complexes, including the SWR1 and the INO80 complexes. The SWR1 complex mediates the ATP-dependent exchange of histone H2A for the H2A variant HZT1 leading to transcriptional regulation of selected genes by chromatin remodeling. The INO80 complex remodels chromatin by shifting nucleosomes and is involved in DNA repair. Also involved in pre-rRNA processing. In Candida albicans (strain SC5314 / ATCC MYA-2876) (Yeast), this protein is RuvB-like helicase 2 (RVB2).